The primary structure comprises 397 residues: Phosphopentomutase (397 aa).

Mn(2+) is bound by residues Asp-10, Asp-296, His-301, Asp-337, His-338, and His-349.

Belongs to the phosphopentomutase family. Requires Mn(2+) as cofactor.

The protein localises to the cytoplasm. It carries out the reaction 2-deoxy-alpha-D-ribose 1-phosphate = 2-deoxy-D-ribose 5-phosphate. It catalyses the reaction alpha-D-ribose 1-phosphate = D-ribose 5-phosphate. Its pathway is carbohydrate degradation; 2-deoxy-D-ribose 1-phosphate degradation; D-glyceraldehyde 3-phosphate and acetaldehyde from 2-deoxy-alpha-D-ribose 1-phosphate: step 1/2. Its function is as follows. Isomerase that catalyzes the conversion of deoxy-ribose 1-phosphate (dRib-1-P) and ribose 1-phosphate (Rib-1-P) to deoxy-ribose 5-phosphate (dRib-5-P) and ribose 5-phosphate (Rib-5-P), respectively. This is Phosphopentomutase from Elusimicrobium minutum (strain Pei191).